The sequence spans 256 residues: Ubiquinone/menaquinone biosynthesis C-methyltransferase UbiE (256 aa).

The span at 1–12 shows a compositional bias: basic and acidic residues; the sequence is MNDQRKGDHAEP. Residues 1 to 23 form a disordered region; that stretch reads MNDQRKGDHAEPTTHFGYQDVPE. S-adenosyl-L-methionine is bound by residues threonine 79, aspartate 100, and 128–129; that span reads DA.

This sequence belongs to the class I-like SAM-binding methyltransferase superfamily. MenG/UbiE family.

It carries out the reaction a 2-demethylmenaquinol + S-adenosyl-L-methionine = a menaquinol + S-adenosyl-L-homocysteine + H(+). The enzyme catalyses a 2-methoxy-6-(all-trans-polyprenyl)benzene-1,4-diol + S-adenosyl-L-methionine = a 5-methoxy-2-methyl-3-(all-trans-polyprenyl)benzene-1,4-diol + S-adenosyl-L-homocysteine + H(+). It participates in quinol/quinone metabolism; menaquinone biosynthesis; menaquinol from 1,4-dihydroxy-2-naphthoate: step 2/2. The protein operates within cofactor biosynthesis; ubiquinone biosynthesis. Its function is as follows. Methyltransferase required for the conversion of demethylmenaquinol (DMKH2) to menaquinol (MKH2) and the conversion of 2-polyprenyl-6-methoxy-1,4-benzoquinol (DDMQH2) to 2-polyprenyl-3-methyl-6-methoxy-1,4-benzoquinol (DMQH2). The polypeptide is Ubiquinone/menaquinone biosynthesis C-methyltransferase UbiE (Pseudomonas putida (strain ATCC 700007 / DSM 6899 / JCM 31910 / BCRC 17059 / LMG 24140 / F1)).